The sequence spans 113 residues: uncharacterized protein (113 aa).

This is an uncharacterized protein from Mycoplasma pneumoniae (strain ATCC 29342 / M129 / Subtype 1) (Mycoplasmoides pneumoniae).